A 612-amino-acid chain; its full sequence is Dihydroxy-acid dehydratase (612 aa).

Residue Asp-81 coordinates Mg(2+). Cys-122 is a [2Fe-2S] cluster binding site. Mg(2+) contacts are provided by Asp-123 and Lys-124. Lys-124 bears the N6-carboxylysine mark. Cys-193 is a [2Fe-2S] cluster binding site. Residue Glu-489 participates in Mg(2+) binding. Ser-515 (proton acceptor) is an active-site residue.

This sequence belongs to the IlvD/Edd family. Homodimer. [2Fe-2S] cluster serves as cofactor. Mg(2+) is required as a cofactor.

It catalyses the reaction (2R)-2,3-dihydroxy-3-methylbutanoate = 3-methyl-2-oxobutanoate + H2O. The enzyme catalyses (2R,3R)-2,3-dihydroxy-3-methylpentanoate = (S)-3-methyl-2-oxopentanoate + H2O. It participates in amino-acid biosynthesis; L-isoleucine biosynthesis; L-isoleucine from 2-oxobutanoate: step 3/4. It functions in the pathway amino-acid biosynthesis; L-valine biosynthesis; L-valine from pyruvate: step 3/4. In terms of biological role, functions in the biosynthesis of branched-chain amino acids. Catalyzes the dehydration of (2R,3R)-2,3-dihydroxy-3-methylpentanoate (2,3-dihydroxy-3-methylvalerate) into 2-oxo-3-methylpentanoate (2-oxo-3-methylvalerate) and of (2R)-2,3-dihydroxy-3-methylbutanoate (2,3-dihydroxyisovalerate) into 2-oxo-3-methylbutanoate (2-oxoisovalerate), the penultimate precursor to L-isoleucine and L-valine, respectively. This chain is Dihydroxy-acid dehydratase, found in Xanthomonas campestris pv. campestris (strain 8004).